Here is a 364-residue protein sequence, read N- to C-terminus: Protein trichome birefringence-like 40 (364 aa).

The helical; Signal-anchor for type II membrane protein transmembrane segment at 9–25 (LASLSLILFSSFPGLLA) threads the bilayer. Residues 118–120 (GDS) carry the GDS motif motif. The DCXHWCLPGXXDXWN motif motif lies at 341–355 (DCSHWCLPGLPDTWN).

Belongs to the PC-esterase family. TBL subfamily.

The protein resides in the membrane. Its function is as follows. May act as a bridging protein that binds pectin and other cell wall polysaccharides. Probably involved in maintaining esterification of pectins. May be involved in the specific O-acetylation of cell wall polymers. This chain is Protein trichome birefringence-like 40 (TBL40), found in Arabidopsis thaliana (Mouse-ear cress).